A 593-amino-acid chain; its full sequence is DNA primase (593 aa).

A CHC2-type zinc finger spans residues 38–62 (CPFHQEKTPSFTVSDSKRFFYCFGC). In terms of domain architecture, Toprim spans 250-332 (NRSILVEGYF…EKKISFIRLP (83 aa)). Mg(2+)-binding residues include Glu256, Asp300, and Asp302.

Belongs to the DnaG primase family. In terms of assembly, monomer. Interacts with DnaB. Zn(2+) is required as a cofactor. It depends on Mg(2+) as a cofactor.

The enzyme catalyses ssDNA + n NTP = ssDNA/pppN(pN)n-1 hybrid + (n-1) diphosphate.. Its function is as follows. RNA polymerase that catalyzes the synthesis of short RNA molecules used as primers for DNA polymerase during DNA replication. This Rickettsia prowazekii (strain Madrid E) protein is DNA primase.